Reading from the N-terminus, the 264-residue chain is tRNA (guanine-N(1)-)-methyltransferase (264 aa).

Residues Gly116 and 136-141 each bind S-adenosyl-L-methionine; that span reads VGDFVL.

This sequence belongs to the RNA methyltransferase TrmD family. In terms of assembly, homodimer.

The protein localises to the cytoplasm. The enzyme catalyses guanosine(37) in tRNA + S-adenosyl-L-methionine = N(1)-methylguanosine(37) in tRNA + S-adenosyl-L-homocysteine + H(+). Functionally, specifically methylates guanosine-37 in various tRNAs. The polypeptide is tRNA (guanine-N(1)-)-methyltransferase (Koribacter versatilis (strain Ellin345)).